A 219-amino-acid polypeptide reads, in one-letter code: Tegument protein UL14 (219 aa).

The disordered stretch occupies residues 159–219; that stretch reads VHTDAPSRPG…GFARDCPDGE (61 aa). Over residues 186–202 the composition is skewed to pro residues; the sequence is APPPETAPSPEPAPGPA.

It belongs to the alphaherpesvirinae HHV-1 UL14 protein family. Post-translationally, phosphorylated.

The protein localises to the virion tegument. Its subcellular location is the host cytoplasm. The protein resides in the host nucleus. Functionally, contributes to the nuclear transport of the viral transcriptional activator VP16 during the early phase of infection. Therefore, participates indirectly in the regulation of the immediate-early gene expression. Additionally, seems to be important for efficient nuclear targeting of capsids. The protein is Tegument protein UL14 of Human herpesvirus 2 (strain HG52) (HHV-2).